Here is a 120-residue protein sequence, read N- to C-terminus: uncharacterized protein (120 aa).

Positions 1–19 (MTSFAVVARLITRAPRVRA) are cleaved as a signal peptide. Disordered stretches follow at residues 48–71 (VAKKADEGAQTISDAAGNLKDKAK) and 90–120 (DTVTGKTEETKESIKATAKTVERSMNTKNLK). Over residues 90-103 (DTVTGKTEETKESI) the composition is skewed to basic and acidic residues.

This is an uncharacterized protein from Arabidopsis thaliana (Mouse-ear cress).